The primary structure comprises 71 residues: Sec-independent protein translocase protein TatA (71 aa).

The helical transmembrane segment at 1 to 21 (MGSFSIWHWLIVLVIVALIFG) threads the bilayer. The disordered stretch occupies residues 48-71 (ADKTEQVTQQQTTIDVQAKEKQNS).

Belongs to the TatA/E family. In terms of assembly, the Tat system comprises two distinct complexes: a TatABC complex, containing multiple copies of TatA, TatB and TatC subunits, and a separate TatA complex, containing only TatA subunits. Substrates initially bind to the TatABC complex, which probably triggers association of the separate TatA complex to form the active translocon.

The protein resides in the cell inner membrane. Part of the twin-arginine translocation (Tat) system that transports large folded proteins containing a characteristic twin-arginine motif in their signal peptide across membranes. TatA could form the protein-conducting channel of the Tat system. In Bordetella avium (strain 197N), this protein is Sec-independent protein translocase protein TatA.